Here is a 414-residue protein sequence, read N- to C-terminus: Glucose-1-phosphate adenylyltransferase (414 aa).

Alpha-D-glucose 1-phosphate contacts are provided by residues Gly164, 181–182 (EK), and Ser199.

Belongs to the bacterial/plant glucose-1-phosphate adenylyltransferase family. In terms of assembly, homotetramer.

The enzyme catalyses alpha-D-glucose 1-phosphate + ATP + H(+) = ADP-alpha-D-glucose + diphosphate. Its pathway is glycan biosynthesis; glycogen biosynthesis. Functionally, involved in the biosynthesis of ADP-glucose, a building block required for the elongation reactions to produce glycogen. Catalyzes the reaction between ATP and alpha-D-glucose 1-phosphate (G1P) to produce pyrophosphate and ADP-Glc. The protein is Glucose-1-phosphate adenylyltransferase of Leifsonia xyli subsp. xyli (strain CTCB07).